A 181-amino-acid chain; its full sequence is Early upstream open reading frame (181 aa).

This sequence belongs to the EUO family.

The sequence is that of Early upstream open reading frame from Chlamydia caviae (strain ATCC VR-813 / DSM 19441 / 03DC25 / GPIC) (Chlamydophila caviae).